The primary structure comprises 78 residues: Large ribosomal subunit protein bL28 (78 aa).

The tract at residues 1–25 (MSRVCQVTGKRPAVGNNRSHAKNAT) is disordered.

It belongs to the bacterial ribosomal protein bL28 family.

The chain is Large ribosomal subunit protein bL28 from Aliivibrio salmonicida (strain LFI1238) (Vibrio salmonicida (strain LFI1238)).